The following is a 360-amino-acid chain: Inward rectifier potassium channel 13 (360 aa).

Residues Met-1–Asp-50 lie on the Cytoplasmic side of the membrane. The chain crosses the membrane as a helical span at residues Met-51–Ala-77. Topologically, residues Val-78–Ser-105 are extracellular. Residues Phe-106–Tyr-122 constitute an intramembrane region (helical; Pore-forming). Positions Thr-119 to Thr-124 match the Selectivity filter motif. At Gly-123–Cys-131 the chain is on the extracellular side. A helical transmembrane segment spans residues Pro-132 to Val-157. Residues Ala-158–Glu-360 are Cytoplasmic-facing. Ser-287 bears the Phosphoserine; by PKA mark.

It belongs to the inward rectifier-type potassium channel (TC 1.A.2.1) family. KCNJ13 subfamily. Homotetramer. Interacts with RAB28; the interaction may facilitate cone outer segments phagocytosis. Phosphorylation at Ser-287 by PKA increases ionic currents. Expressed in retina.

It localises to the membrane. The protein localises to the cell membrane. It catalyses the reaction K(+)(in) = K(+)(out). Its activity is regulated as follows. Inhibited by Ba(2+) and Cs(+), although sensitivity to those inhibitors is much lower than in other Kir channels. Its function is as follows. Inward rectifier potassium channels are characterized by a greater tendency to allow potassium to flow into the cell rather than out of it. Their voltage dependence is regulated by the concentration of extracellular potassium; as external potassium is raised, the voltage range of the channel opening shifts to more positive voltages. The inward rectification is mainly due to the blockage of outward current by internal magnesium. KCNJ13 has a very low single channel conductance, low sensitivity to block by external barium and cesium, and no dependence of its inward rectification properties on the internal blocking particle magnesium. This Mus musculus (Mouse) protein is Inward rectifier potassium channel 13.